The primary structure comprises 600 residues: Aspartate--tRNA(Asp/Asn) ligase (600 aa).

Position 174 (Glu174) interacts with L-aspartate. An aspartate region spans residues 198–201 (QLFK). Arg220 contacts L-aspartate. ATP is bound by residues 220–222 (RDE) and Gln229. His457 lines the L-aspartate pocket. Glu491 contacts ATP. Arg498 provides a ligand contact to L-aspartate. An ATP-binding site is contributed by 543-546 (GLDR).

Belongs to the class-II aminoacyl-tRNA synthetase family. Type 1 subfamily. As to quaternary structure, homodimer.

The protein localises to the cytoplasm. The enzyme catalyses tRNA(Asx) + L-aspartate + ATP = L-aspartyl-tRNA(Asx) + AMP + diphosphate. Its function is as follows. Aspartyl-tRNA synthetase with relaxed tRNA specificity since it is able to aspartylate not only its cognate tRNA(Asp) but also tRNA(Asn). Reaction proceeds in two steps: L-aspartate is first activated by ATP to form Asp-AMP and then transferred to the acceptor end of tRNA(Asp/Asn). The protein is Aspartate--tRNA(Asp/Asn) ligase of Burkholderia orbicola (strain AU 1054).